The sequence spans 549 residues: Glucose-6-phosphate isomerase (549 aa).

The active-site Proton donor is the Glu-355. Catalysis depends on residues His-386 and Lys-514.

The protein belongs to the GPI family.

The protein localises to the cytoplasm. It carries out the reaction alpha-D-glucose 6-phosphate = beta-D-fructose 6-phosphate. It participates in carbohydrate biosynthesis; gluconeogenesis. The protein operates within carbohydrate degradation; glycolysis; D-glyceraldehyde 3-phosphate and glycerone phosphate from D-glucose: step 2/4. In terms of biological role, catalyzes the reversible isomerization of glucose-6-phosphate to fructose-6-phosphate. This is Glucose-6-phosphate isomerase from Edwardsiella ictaluri (strain 93-146).